The primary structure comprises 367 residues: MYFELAKRNLKRNLLRSILALLGIIIGVAAISSLGILGGGLKQGIMENLGSISNYIIVFPNYQNGYTSFDKRDIEKLRVLNCKVIPVYATSDFVYIKGKNRKAYANIFGIDKNDIKYLNLKVKVSDTSVAVDTFFSNVNDVNVGNQLEIKNISLRICGIYNSTFLFPDNSLILTAKTYRRFYGENNYNYSRIILYVKNINDIDKIKNETDKILNRKEKKCIIISLNSILEAINGVITKVSYFLMGIGAISLLVAGIGIGNVMLMSVVERTTEIGVMRSIGASKKDIIILFLYEALILGVIGSLIGAFLSLFFGYLIVHYLLKTSLSYYAIFYMIIGIIFGILTSLISALYPAYKASKLDPIKSLRNE.

Helical transmembrane passes span isoleucine 18–glycine 38, valine 239–glycine 259, isoleucine 296–isoleucine 316, and alanine 329–leucine 349.

This sequence belongs to the ABC-4 integral membrane protein family.

It localises to the cell membrane. This is an uncharacterized protein from Methanocaldococcus jannaschii (strain ATCC 43067 / DSM 2661 / JAL-1 / JCM 10045 / NBRC 100440) (Methanococcus jannaschii).